Consider the following 122-residue polypeptide: Large ribosomal subunit protein uL14 (122 aa).

Belongs to the universal ribosomal protein uL14 family. As to quaternary structure, part of the 50S ribosomal subunit. Forms a cluster with proteins L3 and L19. In the 70S ribosome, L14 and L19 interact and together make contacts with the 16S rRNA in bridges B5 and B8.

Binds to 23S rRNA. Forms part of two intersubunit bridges in the 70S ribosome. This Macrococcus caseolyticus (strain JCSC5402) (Macrococcoides caseolyticum) protein is Large ribosomal subunit protein uL14.